Consider the following 438-residue polypeptide: Adenosylhomocysteinase (438 aa).

Substrate contacts are provided by Thr-64, Asp-139, and Glu-164. 165–167 (TTT) contacts NAD(+). Residues Lys-194 and Asp-198 each coordinate substrate. Residues Asn-199, 228 to 233 (GYGDVG), Glu-251, Asn-286, 307 to 309 (IGH), and Asn-352 contribute to the NAD(+) site.

This sequence belongs to the adenosylhomocysteinase family. It depends on NAD(+) as a cofactor.

The protein resides in the cytoplasm. The catalysed reaction is S-adenosyl-L-homocysteine + H2O = L-homocysteine + adenosine. It functions in the pathway amino-acid biosynthesis; L-homocysteine biosynthesis; L-homocysteine from S-adenosyl-L-homocysteine: step 1/1. In terms of biological role, may play a key role in the regulation of the intracellular concentration of adenosylhomocysteine. The protein is Adenosylhomocysteinase of Coxiella burnetii (strain RSA 493 / Nine Mile phase I).